We begin with the raw amino-acid sequence, 434 residues long: Alpha-enolase (434 aa).

Ser40 provides a ligand contact to Mg(2+). Positions 158 and 167 each coordinate substrate. Glu210 (proton donor) is an active-site residue. Mg(2+) is bound by residues Asp245, Glu293, and Asp318. Positions 293 and 318 each coordinate substrate. The active-site Proton acceptor is the Lys343. Substrate is bound by residues 370–373 and Lys394; that span reads SHRS.

It belongs to the enolase family. Homodimer. The cofactor is Mg(2+).

Its subcellular location is the cytoplasm. The catalysed reaction is (2R)-2-phosphoglycerate = phosphoenolpyruvate + H2O. The protein operates within carbohydrate degradation; glycolysis; pyruvate from D-glyceraldehyde 3-phosphate: step 4/5. The sequence is that of Alpha-enolase from Sceloporus undulatus (Eastern fence lizard).